A 436-amino-acid polypeptide reads, in one-letter code: Gamma-glutamyl phosphate reductase (436 aa).

Belongs to the gamma-glutamyl phosphate reductase family.

The protein resides in the cytoplasm. The enzyme catalyses L-glutamate 5-semialdehyde + phosphate + NADP(+) = L-glutamyl 5-phosphate + NADPH + H(+). It participates in amino-acid biosynthesis; L-proline biosynthesis; L-glutamate 5-semialdehyde from L-glutamate: step 2/2. In terms of biological role, catalyzes the NADPH-dependent reduction of L-glutamate 5-phosphate into L-glutamate 5-semialdehyde and phosphate. The product spontaneously undergoes cyclization to form 1-pyrroline-5-carboxylate. The chain is Gamma-glutamyl phosphate reductase from Prochlorococcus marinus (strain MIT 9301).